Reading from the N-terminus, the 348-residue chain is Photosystem II protein D1 (348 aa).

3 consecutive transmembrane segments (helical) span residues 33-50 (YIGW…LATV), 122-137 (HFIL…EWEF), and 146-160 (WIFV…AASA). Histidine 122 provides a ligand contact to chlorophyll a. Residue tyrosine 130 coordinates pheophytin a. Positions 174 and 193 each coordinate [CaMn4O5] cluster. The helical transmembrane segment at 201-222 (FHILGVAAVFGGSLFSAMHGSL) threads the bilayer. Residue histidine 202 participates in chlorophyll a binding. A quinone contacts are provided by residues histidine 219 and 268-269 (SF). A Fe cation-binding site is contributed by histidine 219. Histidine 276 is a Fe cation binding site. Residues 278-292 (FLAAWPVIGIWFTAL) traverse the membrane as a helical segment. Histidine 336, glutamate 337, aspartate 346, and alanine 348 together coordinate [CaMn4O5] cluster.

It belongs to the reaction center PufL/M/PsbA/D family. PSII is composed of 1 copy each of membrane proteins PsbA, PsbB, PsbC, PsbD, PsbE, PsbF, PsbH, PsbI, PsbJ, PsbK, PsbL, PsbM, PsbT, PsbX, PsbY, PsbZ, Psb30/Ycf12, at least 3 peripheral proteins of the oxygen-evolving complex and a large number of cofactors. It forms dimeric complexes. The cofactor is The D1/D2 heterodimer binds P680, chlorophylls that are the primary electron donor of PSII, and subsequent electron acceptors. It shares a non-heme iron and each subunit binds pheophytin, quinone, additional chlorophylls, carotenoids and lipids. D1 provides most of the ligands for the Mn4-Ca-O5 cluster of the oxygen-evolving complex (OEC). There is also a Cl(-1) ion associated with D1 and D2, which is required for oxygen evolution. The PSII complex binds additional chlorophylls, carotenoids and specific lipids.. In terms of processing, tyr-165 forms a radical intermediate that is referred to as redox-active TyrZ, YZ or Y-Z.

It is found in the plastid. The protein localises to the chloroplast thylakoid membrane. It catalyses the reaction 2 a plastoquinone + 4 hnu + 2 H2O = 2 a plastoquinol + O2. Its function is as follows. Photosystem II (PSII) is a light-driven water:plastoquinone oxidoreductase that uses light energy to abstract electrons from H(2)O, generating O(2) and a proton gradient subsequently used for ATP formation. It consists of a core antenna complex that captures photons, and an electron transfer chain that converts photonic excitation into a charge separation. The D1/D2 (PsbA/PsbD) reaction center heterodimer binds P680, the primary electron donor of PSII as well as several subsequent electron acceptors. This Heterocapsa pygmaea (Dinoflagellate) protein is Photosystem II protein D1.